Here is a 331-residue protein sequence, read N- to C-terminus: Vitamin B12 import system permease protein BtuC (331 aa).

A run of 9 helical transmembrane segments spans residues tryptophan 18–glutamate 38, leucine 64–phenylalanine 84, proline 91–glycine 111, valine 114–isoleucine 134, leucine 149–phenylalanine 169, leucine 194–leucine 214, glycine 243–isoleucine 263, valine 277–alanine 297, and glutamate 305–leucine 325.

It belongs to the binding-protein-dependent transport system permease family. FecCD subfamily. As to quaternary structure, the complex is composed of two ATP-binding proteins (BtuD), two transmembrane proteins (BtuC) and a solute-binding protein (BtuF).

The protein localises to the cell inner membrane. Functionally, part of the ABC transporter complex BtuCDF involved in vitamin B12 import. Involved in the translocation of the substrate across the membrane. The sequence is that of Vitamin B12 import system permease protein BtuC from Klebsiella pneumoniae subsp. pneumoniae (strain ATCC 700721 / MGH 78578).